We begin with the raw amino-acid sequence, 609 residues long: Chaperone protein DnaK (609 aa).

Residue threonine 173 is modified to Phosphothreonine; by autocatalysis. Over residues 525–542 (ENISDEDKKNAEEKKDAL) the composition is skewed to basic and acidic residues. Disordered stretches follow at residues 525 to 554 (ENIS…IDDI) and 574 to 609 (EQAQ…EDKK). Positions 574–587 (EQAQQAQQQGQEEQ) are enriched in low complexity. The span at 597–609 (ADFKEVKDDEDKK) shows a compositional bias: basic and acidic residues.

It belongs to the heat shock protein 70 family.

Its function is as follows. Acts as a chaperone. In Staphylococcus epidermidis (strain ATCC 35984 / DSM 28319 / BCRC 17069 / CCUG 31568 / BM 3577 / RP62A), this protein is Chaperone protein DnaK.